Reading from the N-terminus, the 88-residue chain is Elongation factor 1-beta (88 aa).

It belongs to the EF-1-beta/EF-1-delta family.

Promotes the exchange of GDP for GTP in EF-1-alpha/GDP, thus allowing the regeneration of EF-1-alpha/GTP that could then be used to form the ternary complex EF-1-alpha/GTP/AAtRNA. This chain is Elongation factor 1-beta, found in Natronomonas pharaonis (strain ATCC 35678 / DSM 2160 / CIP 103997 / JCM 8858 / NBRC 14720 / NCIMB 2260 / Gabara) (Halobacterium pharaonis).